The primary structure comprises 723 residues: 1,3-alpha-isomaltosidase (723 aa).

The active-site Nucleophile is the Asp451. Glu454 is an active-site residue. The active-site Proton donor is the Asp516. His581 serves as a coordination point for substrate.

It belongs to the glycosyl hydrolase 31 family.

It localises to the cytoplasm. It catalyses the reaction cyclobis-(1-&gt;3)-alpha-D-isomaltosyl + 2 H2O = 2 isomaltose. In terms of biological role, involved in the intracellular degradation of the cyclic tetrasaccharide cyclobis-(1-6)-alpha-nigerosyl (CNN) formed extracellularly from starch. Catalyzes the hydrolysis of the alpha-1,3-glucosidic linkage of cyclobis-(1-6)-alpha-nigerosyl (CNN) to yield isomaltose via a possible linear tetrasaccharide. It has a strong preference for the alpha-(1-3)-isomaltosyl moiety. This is 1,3-alpha-isomaltosidase from Kribbella flavida (strain DSM 17836 / JCM 10339 / NBRC 14399).